A 265-amino-acid chain; its full sequence is Glutamate racemase (265 aa).

Residues 9–10 and 41–42 contribute to the substrate site; these read DS and YG. The active-site Proton donor/acceptor is the C72. 73 to 74 serves as a coordination point for substrate; the sequence is NT. The Proton donor/acceptor role is filled by C183. Residue 184–185 coordinates substrate; the sequence is TH.

Belongs to the aspartate/glutamate racemases family.

The enzyme catalyses L-glutamate = D-glutamate. It participates in cell wall biogenesis; peptidoglycan biosynthesis. Functionally, provides the (R)-glutamate required for cell wall biosynthesis. The protein is Glutamate racemase of Lysinibacillus sphaericus (Bacillus sphaericus).